The sequence spans 698 residues: Elongation factor G (698 aa).

The 277-residue stretch at 8–284 (ANVRNIGIMA…AVVDFLPSPL (277 aa)) folds into the tr-type G domain. Residues 17–24 (AHIDAGKT), 81–85 (DTPGH), and 135–138 (NKLD) contribute to the GTP site. The disordered stretch occupies residues 289 to 309 (IEGTGTDGETPLQRKPSTSEP).

Belongs to the TRAFAC class translation factor GTPase superfamily. Classic translation factor GTPase family. EF-G/EF-2 subfamily.

Its subcellular location is the cytoplasm. Functionally, catalyzes the GTP-dependent ribosomal translocation step during translation elongation. During this step, the ribosome changes from the pre-translocational (PRE) to the post-translocational (POST) state as the newly formed A-site-bound peptidyl-tRNA and P-site-bound deacylated tRNA move to the P and E sites, respectively. Catalyzes the coordinated movement of the two tRNA molecules, the mRNA and conformational changes in the ribosome. In Salinispora arenicola (strain CNS-205), this protein is Elongation factor G.